Consider the following 162-residue polypeptide: RNA replication protein (162 aa).

Belongs to the potexvirus/carlavirus RNA replication protein family.

It carries out the reaction RNA(n) + a ribonucleoside 5'-triphosphate = RNA(n+1) + diphosphate. The catalysed reaction is ATP + H2O = ADP + phosphate + H(+). RNA replication. The central part of this protein possibly functions as an ATP-binding helicase. The sequence is that of RNA replication protein from Lilium formosanum.